Reading from the N-terminus, the 131-residue chain is Small ribosomal subunit protein uS8 (131 aa).

It belongs to the universal ribosomal protein uS8 family. Part of the 30S ribosomal subunit. Contacts proteins S5 and S12.

Its function is as follows. One of the primary rRNA binding proteins, it binds directly to 16S rRNA central domain where it helps coordinate assembly of the platform of the 30S subunit. The polypeptide is Small ribosomal subunit protein uS8 (Geobacillus stearothermophilus (Bacillus stearothermophilus)).